A 345-amino-acid polypeptide reads, in one-letter code: Ketol-acid reductoisomerase (NADP(+)) (345 aa).

One can recognise a KARI N-terminal Rossmann domain in the interval 2-182 (AKVYHDSSAD…GTTRAGVLET (181 aa)). Residues 25-28 (YGSQ), arginine 48, serine 51, serine 53, and 83-86 (DTEQ) each bind NADP(+). Residue histidine 108 is part of the active site. Glycine 134 lines the NADP(+) pocket. Residues 183-328 (TFKEETETDL…AQLRDMMTFL (146 aa)) enclose the KARI C-terminal knotted domain. The Mg(2+) site is built by aspartate 191, glutamate 195, glutamate 227, and glutamate 231. Serine 252 is a binding site for substrate.

It belongs to the ketol-acid reductoisomerase family. The cofactor is Mg(2+).

The catalysed reaction is (2R)-2,3-dihydroxy-3-methylbutanoate + NADP(+) = (2S)-2-acetolactate + NADPH + H(+). It carries out the reaction (2R,3R)-2,3-dihydroxy-3-methylpentanoate + NADP(+) = (S)-2-ethyl-2-hydroxy-3-oxobutanoate + NADPH + H(+). Its pathway is amino-acid biosynthesis; L-isoleucine biosynthesis; L-isoleucine from 2-oxobutanoate: step 2/4. The protein operates within amino-acid biosynthesis; L-valine biosynthesis; L-valine from pyruvate: step 2/4. Its function is as follows. Involved in the biosynthesis of branched-chain amino acids (BCAA). Catalyzes an alkyl-migration followed by a ketol-acid reduction of (S)-2-acetolactate (S2AL) to yield (R)-2,3-dihydroxy-isovalerate. In the isomerase reaction, S2AL is rearranged via a Mg-dependent methyl migration to produce 3-hydroxy-3-methyl-2-ketobutyrate (HMKB). In the reductase reaction, this 2-ketoacid undergoes a metal-dependent reduction by NADPH to yield (R)-2,3-dihydroxy-isovalerate. The chain is Ketol-acid reductoisomerase (NADP(+)) from Koribacter versatilis (strain Ellin345).